We begin with the raw amino-acid sequence, 67 residues long: Large ribosomal subunit protein bL35 (67 aa).

Positions 1–16 (MPKMKTKSSAKKRFRV) are enriched in basic residues. The disordered stretch occupies residues 1-24 (MPKMKTKSSAKKRFRVRPGGTVKR).

It belongs to the bacterial ribosomal protein bL35 family.

This is Large ribosomal subunit protein bL35 from Delftia acidovorans (strain DSM 14801 / SPH-1).